A 113-amino-acid polypeptide reads, in one-letter code: Small ribosomal subunit protein bS6 (113 aa).

The protein belongs to the bacterial ribosomal protein bS6 family.

Functionally, binds together with bS18 to 16S ribosomal RNA. This chain is Small ribosomal subunit protein bS6 (rpsF), found in Synechocystis sp. (strain ATCC 27184 / PCC 6803 / Kazusa).